The sequence spans 122 residues: Large ribosomal subunit protein uL14 (122 aa).

It belongs to the universal ribosomal protein uL14 family. In terms of assembly, part of the 50S ribosomal subunit. Forms a cluster with proteins L3 and L19. In the 70S ribosome, L14 and L19 interact and together make contacts with the 16S rRNA in bridges B5 and B8.

Its function is as follows. Binds to 23S rRNA. Forms part of two intersubunit bridges in the 70S ribosome. The polypeptide is Large ribosomal subunit protein uL14 (Ruegeria pomeroyi (strain ATCC 700808 / DSM 15171 / DSS-3) (Silicibacter pomeroyi)).